Consider the following 255-residue polypeptide: tRNA (guanine-N(7)-)-methyltransferase (255 aa).

Positions 1–21 are disordered; sequence MMHDDPNEAGLPPHDDAIPDE. Residues Glu86, Glu111, Asp138, and Asp161 each coordinate S-adenosyl-L-methionine. The active site involves Asp161. Substrate contacts are provided by residues Lys165, Asp197, and 232–235; that span reads TKFE.

It belongs to the class I-like SAM-binding methyltransferase superfamily. TrmB family.

It catalyses the reaction guanosine(46) in tRNA + S-adenosyl-L-methionine = N(7)-methylguanosine(46) in tRNA + S-adenosyl-L-homocysteine. It functions in the pathway tRNA modification; N(7)-methylguanine-tRNA biosynthesis. In terms of biological role, catalyzes the formation of N(7)-methylguanine at position 46 (m7G46) in tRNA. This chain is tRNA (guanine-N(7)-)-methyltransferase, found in Burkholderia lata (strain ATCC 17760 / DSM 23089 / LMG 22485 / NCIMB 9086 / R18194 / 383).